The chain runs to 87 residues: Small ribosomal subunit protein bS21m (87 aa).

The protein belongs to the bacterial ribosomal protein bS21 family. As to quaternary structure, component of the mitochondrial ribosome small subunit (28S) which comprises a 12S rRNA and about 30 distinct proteins.

It is found in the mitochondrion. The chain is Small ribosomal subunit protein bS21m (Mrps21) from Mus musculus (Mouse).